A 344-amino-acid polypeptide reads, in one-letter code: Eukaryotic translation initiation factor 2 subunit alpha homolog (344 aa).

The S1 motif domain maps to 21 to 92 (DMAVMIQVKN…EKGYIDLSKR (72 aa)). A Phosphoserine; by GCN2 modification is found at Ser-56. The segment at 312–344 (DNEEMSGDEDSGDEEEDTGMGEVDLDAGAGIIE) is disordered. A compositionally biased stretch (acidic residues) spans 314 to 336 (EEMSGDEDSGDEEEDTGMGEVDL).

This sequence belongs to the eIF-2-alpha family. In terms of assembly, heterotrimer composed of an alpha, a beta and a gamma chain. In terms of processing, phosphorylated at Ser-56 by GCN2.

In terms of biological role, functions in the early steps of protein synthesis by forming a ternary complex with GTP and initiator tRNA. This complex binds to a 40S ribosomal subunit, followed by mRNA binding to form a 43S pre-initiation complex. Junction of the 60S ribosomal subunit to form the 80S initiation complex is preceded by hydrolysis of the GTP bound to eIF-2 and release of an eIF-2-GDP binary complex. In order for eIF-2 to recycle and catalyze another round of initiation, the GDP bound to eIF-2 must exchange with GTP by way of a reaction catalyzed by eIF-2B. This chain is Eukaryotic translation initiation factor 2 subunit alpha homolog, found in Arabidopsis thaliana (Mouse-ear cress).